The primary structure comprises 665 residues: DNA ligase (665 aa).

NAD(+) is bound by residues 31–35, 80–81, and E110; these read DKEFD and SL. The N6-AMP-lysine intermediate role is filled by K112. NAD(+) is bound by residues R133, E170, K285, and K309. C403, C406, C421, and C427 together coordinate Zn(2+). The BRCT domain maps to 587-665; sequence GHTDKLAGQS…NEEEFLKLIS (79 aa).

It belongs to the NAD-dependent DNA ligase family. LigA subfamily. Mg(2+) is required as a cofactor. Requires Mn(2+) as cofactor.

It catalyses the reaction NAD(+) + (deoxyribonucleotide)n-3'-hydroxyl + 5'-phospho-(deoxyribonucleotide)m = (deoxyribonucleotide)n+m + AMP + beta-nicotinamide D-nucleotide.. In terms of biological role, DNA ligase that catalyzes the formation of phosphodiester linkages between 5'-phosphoryl and 3'-hydroxyl groups in double-stranded DNA using NAD as a coenzyme and as the energy source for the reaction. It is essential for DNA replication and repair of damaged DNA. The chain is DNA ligase from Bacteroides fragilis (strain ATCC 25285 / DSM 2151 / CCUG 4856 / JCM 11019 / LMG 10263 / NCTC 9343 / Onslow / VPI 2553 / EN-2).